The primary structure comprises 1064 residues: Leucine--tRNA ligase (1064 aa).

A disordered region spans residues 1–25 (MARAMSETAEPGARTGAADTTVAPT). Residues 106–117 (PYPSGSGLHVGH) carry the 'HIGH' region motif. Positions 435 to 456 (GRPGGGTEPADTAGPEAGADPA) are disordered. Residues 831-835 (KMGKS) carry the 'KMSKS' region motif. Position 834 (lysine 834) interacts with ATP.

The protein belongs to the class-I aminoacyl-tRNA synthetase family.

It localises to the cytoplasm. It catalyses the reaction tRNA(Leu) + L-leucine + ATP = L-leucyl-tRNA(Leu) + AMP + diphosphate. This is Leucine--tRNA ligase from Frankia casuarinae (strain DSM 45818 / CECT 9043 / HFP020203 / CcI3).